A 172-amino-acid polypeptide reads, in one-letter code: 3-hydroxydecanoyl-[acyl-carrier-protein] dehydratase (172 aa).

His71 is an active-site residue.

This sequence belongs to the thioester dehydratase family. FabA subfamily. As to quaternary structure, homodimer.

The protein localises to the cytoplasm. It catalyses the reaction a (3R)-hydroxyacyl-[ACP] = a (2E)-enoyl-[ACP] + H2O. The enzyme catalyses (3R)-hydroxydecanoyl-[ACP] = (2E)-decenoyl-[ACP] + H2O. It carries out the reaction (2E)-decenoyl-[ACP] = (3Z)-decenoyl-[ACP]. The protein operates within lipid metabolism; fatty acid biosynthesis. Its function is as follows. Necessary for the introduction of cis unsaturation into fatty acids. Catalyzes the dehydration of (3R)-3-hydroxydecanoyl-ACP to E-(2)-decenoyl-ACP and then its isomerization to Z-(3)-decenoyl-ACP. Can catalyze the dehydratase reaction for beta-hydroxyacyl-ACPs with saturated chain lengths up to 16:0, being most active on intermediate chain length. The protein is 3-hydroxydecanoyl-[acyl-carrier-protein] dehydratase of Klebsiella pneumoniae (strain 342).